The sequence spans 223 residues: N-terminal Xaa-Pro-Lys N-methyltransferase 1 (223 aa).

Met1 carries the post-translational modification N-acetylmethionine. Thr2 bears the N-acetylthreonine; in N-terminal Xaa-Pro-Lys N-methyltransferase 1, N-terminally processed mark. S-adenosyl-L-methionine-binding positions include Gly69, Arg74, 91–93 (DVT), 119–120 (LQ), and Gln135.

Belongs to the methyltransferase superfamily. NTM1 family.

The protein localises to the nucleus. It carries out the reaction N-terminal L-alanyl-L-prolyl-L-lysyl-[protein] + 3 S-adenosyl-L-methionine = N-terminal N,N,N-trimethyl-L-alanyl-L-prolyl-L-lysyl-[protein] + 3 S-adenosyl-L-homocysteine + 3 H(+). The enzyme catalyses N-terminal L-seryl-L-prolyl-L-lysyl-[protein] + 3 S-adenosyl-L-methionine = N-terminal N,N,N-trimethyl-L-seryl-L-prolyl-L-lysyl-[protein] + 3 S-adenosyl-L-homocysteine + 3 H(+). It catalyses the reaction N-terminal L-prolyl-L-prolyl-L-lysyl-[protein] + 2 S-adenosyl-L-methionine = N-terminal N,N-dimethyl-L-prolyl-L-prolyl-L-lysyl-[protein] + 2 S-adenosyl-L-homocysteine + 2 H(+). Its function is as follows. Distributive alpha-N-methyltransferase that methylates the N-terminus of target proteins containing the N-terminal motif [Ala/Gly/Pro/Ser]-Pro-Lys when the initiator Met is cleaved. Specifically catalyzes mono-, di- or tri-methylation of the exposed alpha-amino group of the Ala, Gly or Ser residue in the [Ala/Gly/Ser]-Pro-Lys motif and mono- or di-methylation of Pro in the Pro-Pro-Lys motif. Some of the substrates may be primed by NTMT2-mediated monomethylation. Catalyzes the trimethylation of the N-terminal Gly in CENPA (after removal of Met-1). Responsible for the N-terminal methylation of KLHL31, MYL2, MYL3, RB1, RCC1, RPL23A and SET. Required during mitosis for normal bipolar spindle formation and chromosome segregation via its action on RCC1. This is N-terminal Xaa-Pro-Lys N-methyltransferase 1 (NTMT1) from Ailuropoda melanoleuca (Giant panda).